Here is a 239-residue protein sequence, read N- to C-terminus: Phosphoribosylaminoimidazole-succinocarboxamide synthase (239 aa).

It belongs to the SAICAR synthetase family.

The enzyme catalyses 5-amino-1-(5-phospho-D-ribosyl)imidazole-4-carboxylate + L-aspartate + ATP = (2S)-2-[5-amino-1-(5-phospho-beta-D-ribosyl)imidazole-4-carboxamido]succinate + ADP + phosphate + 2 H(+). The protein operates within purine metabolism; IMP biosynthesis via de novo pathway; 5-amino-1-(5-phospho-D-ribosyl)imidazole-4-carboxamide from 5-amino-1-(5-phospho-D-ribosyl)imidazole-4-carboxylate: step 1/2. The sequence is that of Phosphoribosylaminoimidazole-succinocarboxamide synthase from Bacillus cytotoxicus (strain DSM 22905 / CIP 110041 / 391-98 / NVH 391-98).